A 233-amino-acid polypeptide reads, in one-letter code: Putative quercetin 2,3-dioxygenase PM1685 (233 aa).

A divalent metal cation is bound by residues His59, His61, His103, and Glu105.

It belongs to the pirin family. A divalent metal cation serves as cofactor.

The enzyme catalyses quercetin + O2 = 2-(3,4-dihydroxybenzoyloxy)-4,6-dihydroxybenzoate + CO. It functions in the pathway flavonoid metabolism; quercetin degradation. Functionally, putative quercetin 2,3-dioxygenase. The sequence is that of Putative quercetin 2,3-dioxygenase PM1685 from Pasteurella multocida (strain Pm70).